The following is a 616-amino-acid chain: Chaperone protein HscA (616 aa).

This sequence belongs to the heat shock protein 70 family.

Functionally, chaperone involved in the maturation of iron-sulfur cluster-containing proteins. Has a low intrinsic ATPase activity which is markedly stimulated by HscB. Involved in the maturation of IscU. The sequence is that of Chaperone protein HscA from Escherichia coli O139:H28 (strain E24377A / ETEC).